The sequence spans 276 residues: MSYGPLDMYRNPGPSGPQLRDFSSIIQTCSGNIQRISQATAQIKNSMSQLGTKQDSSKLQENLQQLQHSTNQLAKETNELLKELGSLPLPLSTSEQRQQRLQKERLMNDFSAALNNFQAVQRRVSEKEKESIARARAGSRLSAEERQREEQLVSFDSHEEWNQMQSQDDEVAITEQDLELIKERETAIRQLEADILDVNQIFKDLAMMIHDQGDLIDSIEANVESSEVHVERATEQLQRAAYYQKKSRKKMCILVLVLSVIIVILGLIIWLVYKTK.

Serine 2 carries the N-acetylserine modification. The Cytoplasmic segment spans residues 2–248 (SYGPLDMYRN…RAAYYQKKSR (247 aa)). A coiled-coil region spans residues 33-131 (IQRISQATAQ…RRVSEKEKES (99 aa)). 4 positions are modified to phosphoserine: serine 139, serine 142, serine 218, and serine 225. A t-SNARE coiled-coil homology domain is found at 178–240 (LELIKERETA…ERATEQLQRA (63 aa)). Residues 249–269 (KKMCILVLVLSVIIVILGLII) form a helical; Anchor for type IV membrane protein membrane-spanning segment. Residues 270–276 (WLVYKTK) lie on the Vesicular side of the membrane.

This sequence belongs to the syntaxin family. As to quaternary structure, associates with the BLOC-1 complex. Interacts with BLOC1S6. Interacts with NAPA and SNAP23. Identified in a complex containing STX6, STX12, VAMP4 and VTI1A. Interacts with GRIPAP1. Forms a complex with GRIP1, GRIA2 and NSG1; controls the intracellular fate of AMPAR and the endosomal sorting of the GRIA2 subunit toward recycling and membrane targeting. Interacts with NSG1. Interacts with TPC1. Interacts (via N-terminus) with VPS13B.

Its subcellular location is the endosome membrane. It localises to the golgi apparatus membrane. The protein resides in the endomembrane system. The protein localises to the early endosome membrane. It is found in the recycling endosome membrane. In terms of biological role, SNARE promoting fusion of transport vesicles with target membranes. Together with SNARE STX6, promotes movement of vesicles from endosomes to the cell membrane, and may therefore function in the endocytic recycling pathway. Through complex formation with GRIP1, GRIA2 and NSG1 controls the intracellular fate of AMPAR and the endosomal sorting of the GRIA2 subunit toward recycling and membrane targeting. The sequence is that of Syntaxin-12 (STX12) from Pongo abelii (Sumatran orangutan).